The primary structure comprises 1568 residues: Agglutinin-like protein 7 (1568 aa).

Residues 1–18 (MKKLYLLYLLASFTTVIS) form the signal peptide. Disulfide bonds link Cys-74–Cys-151, Cys-97–Cys-113, Cys-206–Cys-299, and Cys-228–Cys-257. ALS repeat units follow at residues 403-434 (TTLTTYWQESSTATTTYFDDIDLVDTVIVKIP), 441-471 (ITTQFWSGKYLTTETHKEPPLGTDSVIIKEP), 476-507 (VTTTEFWSESFATTETITNNPEGTDSVIIKEP), and 512-543 (VTTTKFWSESFATTETITTGPLGTDSIVIHDP). Disordered stretches follow at residues 546–662 (ESSS…SSSS), 721–743 (LSSDTSSYYPSSTISPSDDFPHT), and 767–832 (VSLT…SIPT). Composition is skewed to low complexity over residues 547–662 (SSSS…SSSS), 721–738 (LSSDTSSYYPSSTISPSD), 768–793 (SLTSDPASSFDSSSRLNSDSSSSPST), and 801–824 (SSSFSTLIKSSESRESSSGTILSE). Asn-559 carries an N-linked (GlcNAc...) asparagine glycan. Asn-851 carries an N-linked (GlcNAc...) asparagine glycan. Disordered stretches follow at residues 860 to 1030 (VVSS…VASE) and 1046 to 1097 (EVVS…ENSD). Low complexity predominate over residues 872-904 (ESSVSVTSESSESVTSESVASESVTSESVTAVS). Polar residues predominate over residues 909-918 (LYTTSEEVST). Positions 919–945 (SDSNSGMSSPIPSSEQRSSIPIMSSSD) are enriched in low complexity. The segment covering 956–992 (GTILSEESSDSIPTTFSTRYWSPSGMSSRHYTNSTET) has biased composition (polar residues). A glycan (N-linked (GlcNAc...) asparagine) is linked at Asn-988. Low complexity-rich tracts occupy residues 993 to 1002 (SVSDVVSSSV) and 1009 to 1030 (ESSVSVISESSESVTSESVASE). Over residues 1046–1062 (EVVSTSDSKIVPSTSVP) the composition is skewed to polar residues. Low complexity predominate over residues 1063-1077 (SSEQRSSIPIMSSSD). N-linked (GlcNAc...) asparagine glycosylation is present at Asn-1188. Disordered stretches follow at residues 1194 to 1220 (LGMSNSDDGLSEDTRSSSVAGKEEIEL) and 1271 to 1305 (GLSDSDTFPSENSNRSRSFKESTDNTISISRESLG). 2 stretches are compositionally biased toward polar residues: residues 1272 to 1286 (LSDSDTFPSENSNRS) and 1294 to 1303 (DNTISISRES). N-linked (GlcNAc...) asparagine glycosylation occurs at Asn-1284. Ser-1548 carries the GPI-anchor amidated serine lipid modification. Positions 1549 to 1568 (GSVSKYSLWMMAFYMLFGLF) are cleaved as a propeptide — removed in mature form.

It belongs to the ALS family. Post-translationally, the GPI-anchor is attached to the protein in the endoplasmic reticulum and serves to target the protein to the cell surface. There, the glucosamine-inositol phospholipid moiety is cleaved off and the GPI-modified mannoprotein is covalently attached via its lipidless GPI glycan remnant to the 1,6-beta-glucan of the outer cell wall layer.

The protein resides in the cell membrane. Its subcellular location is the secreted. It localises to the cell wall. In terms of biological role, cell surface adhesion protein which mediates both yeast-to-host tissue adherence and yeast aggregation. Plays an important role in the pathogenesis of C.albicans infections. The polypeptide is Agglutinin-like protein 7 (ALS7) (Candida albicans (strain SC5314 / ATCC MYA-2876) (Yeast)).